The primary structure comprises 305 residues: MPIKIPADLPAYDVLTREGVMVMDPDQAARQDIRPLRIGLLNLMPKKIQTENQFARLIGATPLQIELSLIRMSEHQTKNTAAEHMESFYRPFQDIKSEKFDGLIITGAPIEHLDFQDVTYWDELREVMDWTQTNVHSTFGVCWGGMAMINHFHGVRKHMLEAKAFGCFRHRNLAPASPYLRGFSDECVIPVSRWTEMRQSEIDAAEGLKTLLGSDQVGPCLVQDKAHRALYIFNHFEYDSETLKQEYDRDVAAGNQINVPLNYYPDDDPSRAPLNRWRSHAHLLYGNWLTEIYQDTPYDIDAIGR.

The active-site Acyl-thioester intermediate is C142. The substrate site is built by K163 and S192. The Proton acceptor role is filled by H235. E237 is a catalytic residue. Residue R249 coordinates substrate.

This sequence belongs to the MetA family.

It is found in the cytoplasm. It carries out the reaction L-homoserine + acetyl-CoA = O-acetyl-L-homoserine + CoA. Its pathway is amino-acid biosynthesis; L-methionine biosynthesis via de novo pathway; O-acetyl-L-homoserine from L-homoserine: step 1/1. Transfers an acetyl group from acetyl-CoA to L-homoserine, forming acetyl-L-homoserine. This Roseobacter denitrificans (strain ATCC 33942 / OCh 114) (Erythrobacter sp. (strain OCh 114)) protein is Homoserine O-acetyltransferase.